The following is a 290-amino-acid chain: tRNA (adenine(58)-N(1))-methyltransferase catalytic subunit TRMT61A (290 aa).

An N-acetylserine modification is found at Ser2. 5 substrate regions span residues 20–22 (LGH), 35–42 (QTQTRHGV), 64–65 (GW), 85–89 (QILYS), and 110–117 (SGTGSGSV). S-adenosyl-L-methionine-binding positions include Leu87, 114-116 (SGS), Glu135, Arg140, 163-164 (DV), and Asp181. Substrate stretches follow at residues 180 to 183 (LDIP) and 205 to 212 (SFSPCIEQ). Position 264 is a phosphoserine (Ser264). Thr279 is a substrate binding site.

It belongs to the class I-like SAM-binding methyltransferase superfamily. TRM61 family. In terms of assembly, heterotetramer; composed of two copies of TRMT6 and two copies of TRMT61A.

It localises to the nucleus. It carries out the reaction adenosine(58) in tRNA + S-adenosyl-L-methionine = N(1)-methyladenosine(58) in tRNA + S-adenosyl-L-homocysteine + H(+). The catalysed reaction is an adenosine in mRNA + S-adenosyl-L-methionine = an N(1)-methyladenosine in mRNA + S-adenosyl-L-homocysteine + H(+). Functionally, catalytic subunit of tRNA (adenine-N(1)-)-methyltransferase, which catalyzes the formation of N(1)-methyladenine at position 58 (m1A58) in initiator methionyl-tRNA. Catalytic subunit of mRNA N(1)-methyltransferase complex, which mediates methylation of adenosine residues at the N(1) position of a small subset of mRNAs: N(1) methylation takes place in tRNA T-loop-like structures of mRNAs and is only present at low stoichiometries. The sequence is that of tRNA (adenine(58)-N(1))-methyltransferase catalytic subunit TRMT61A (Trmt61a) from Mus musculus (Mouse).